A 266-amino-acid polypeptide reads, in one-letter code: Small ribosomal subunit protein eS1 (266 aa).

Residues 233-266 (GEGGGSSAAKPSGDDTGAKVDRADGYEPPIQETV) form a disordered region. A compositionally biased stretch (basic and acidic residues) spans 244–257 (SGDDTGAKVDRADG).

The protein belongs to the eukaryotic ribosomal protein eS1 family. In terms of assembly, component of the small ribosomal subunit. Mature ribosomes consist of a small (40S) and a large (60S) subunit. The 40S subunit contains about 33 different proteins and 1 molecule of RNA (18S). The 60S subunit contains about 49 different proteins and 3 molecules of RNA (28S, 5.8S and 5S). Part of the small subunit (SSU) processome, composed of more than 70 proteins and the RNA chaperone small nucleolar RNA (snoRNA) U3.

The protein resides in the cytoplasm. Its subcellular location is the nucleus. It localises to the nucleolus. Component of the small ribosomal subunit. The ribosome is a large ribonucleoprotein complex responsible for the synthesis of proteins in the cell. Part of the small subunit (SSU) processome, first precursor of the small eukaryotic ribosomal subunit. During the assembly of the SSU processome in the nucleolus, many ribosome biogenesis factors, an RNA chaperone and ribosomal proteins associate with the nascent pre-rRNA and work in concert to generate RNA folding, modifications, rearrangements and cleavage as well as targeted degradation of pre-ribosomal RNA by the RNA exosome. May play a role during erythropoiesis. The protein is Small ribosomal subunit protein eS1 (rps3a) of Salmo salar (Atlantic salmon).